We begin with the raw amino-acid sequence, 334 residues long: UL-16 binding protein 5 (334 aa).

A signal peptide spans 1-25 (MAAAASPAFLLRLPLLLLLSSWCRT). Topologically, residues 26-223 (GLADPHSLCY…TMSSGTAQPR (198 aa)) are extracellular. The segment at 29–117 (DPHSLCYDIT…IQLENYIPKE (89 aa)) is MHC class I alpha-1 like. C50 and C66 are disulfide-bonded. An N-linked (GlcNAc...) asparagine glycan is attached at N82. An MHC class I alpha-2 like region spans residues 118-210 (PLTLQARMSC…MDSTLEPSAG (93 aa)). C127 and C190 are joined by a disulfide. Residue G218 is the site of GPI-anchor amidated glycine attachment. A propeptide spans 219–334 (TAQPRATATT…YSEPLQVSIS (116 aa)) (removed in mature form). Residues 224-243 (ATATTLILCCLLIMCLLICS) traverse the membrane as a helical segment. The Cytoplasmic segment spans residues 244–334 (RHSLTQSHGH…YSEPLQVSIS (91 aa)).

This sequence belongs to the MHC class I family. As to quaternary structure, interacts with KLRK1/NKG2D. (Microbial infection) In CMV-infected cells, interacts with the viral glycoprotein UL16; this interaction causes RAET1G retention in the endoplasmic reticulum and cis-Golgi and prevents binding to and activation of KLRK1/NKG2D, providing CMV with an immune evasion mechanism. In terms of processing, the functional form is cleaved C-terminally of the GPI-anchor and yields a 28 kDa protein. In terms of tissue distribution, isoform 1 is highly expressed in colon and in a number of tumor cell lines and highly restricted in normal tissues. Both isoforms are frequently expressed in cell lines derived from epithelial cancers, and in primary breast cancers.

Its subcellular location is the cell membrane. The protein localises to the endoplasmic reticulum. The protein resides in the secreted. Functionally, binds and activates the KLRK1/NKG2D receptor, mediating natural killer cell cytotoxicity. In terms of biological role, down-regulates the expression of KLRK1 and stimulates natural killer cells to secrete IFNG. Stimulates natural killer cells to secrete IFNG. In Homo sapiens (Human), this protein is UL-16 binding protein 5.